The primary structure comprises 285 residues: MKFYKYHALGNDYLVINPQDLKFPLTPEKIKIICHRNFGIGSDGILLGPLASTKAQFALRIFNPDGSEAEKSGNGLRIFSRYLWDMGLVDEKPFSIETAGGIVESAIKDAGKTVQVEMGKVSFWSRDIPVIGDDREVIQEKIFLDEGIFTFCAATIGNPHCVILLDDINSEVARNFGPIFEGYPLFPNRTNVQFMKVLDRSTIQIEIWERGAGYTLASGSSSSAAAATAHKLGLCDSKIIVKMPGGDILIQIKDDFHISMTDSVTKLAQGELSTEIFAIETVINI.

Substrate is bound by residues N11, N63, 73–74, N158, N191, 209–210, and 219–220; these read GN, ER, and GS.

This sequence belongs to the diaminopimelate epimerase family. In terms of assembly, homodimer.

It is found in the cytoplasm. The enzyme catalyses (2S,6S)-2,6-diaminopimelate = meso-2,6-diaminopimelate. Its pathway is amino-acid biosynthesis; L-lysine biosynthesis via DAP pathway; DL-2,6-diaminopimelate from LL-2,6-diaminopimelate: step 1/1. Its function is as follows. Catalyzes the stereoinversion of LL-2,6-diaminopimelate (L,L-DAP) to meso-diaminopimelate (meso-DAP), a precursor of L-lysine and an essential component of the bacterial peptidoglycan. This is Diaminopimelate epimerase 2 from Nostoc sp. (strain PCC 7120 / SAG 25.82 / UTEX 2576).